We begin with the raw amino-acid sequence, 363 residues long: Putative serine/threonine-protein kinase gskl-1 (363 aa).

Residues 20 to 304 (FGAHKLCGSG…AIDVLKMPLF (285 aa)) enclose the Protein kinase domain. ATP is bound by residues 26 to 34 (CGSGRFSNV) and lysine 50. Aspartate 146 functions as the Proton acceptor in the catalytic mechanism. The disordered stretch occupies residues 311 to 363 (PPKKRSNGVEMPNLASYTEMHHKREPETEVVADIQTTEKAEKESDSTNEELED). The segment covering 346–355 (TTEKAEKESD) has biased composition (basic and acidic residues).

Belongs to the protein kinase superfamily. Ser/Thr protein kinase family. In terms of tissue distribution, expressed during multiple stages of spermatogenesis, in males and hermaphrodites (at protein level).

It is found in the cytoplasm. Its subcellular location is the cell projection. It localises to the pseudopodium. The enzyme catalyses L-seryl-[protein] + ATP = O-phospho-L-seryl-[protein] + ADP + H(+). The catalysed reaction is L-threonyl-[protein] + ATP = O-phospho-L-threonyl-[protein] + ADP + H(+). Its function is as follows. May be an autophosphorylating tyrosine kinase, a bifunctional (serine/tyrosine-specific) protein kinase, or a serine kinase that is a substrate for an associated tyrosine kinase. Acting in concert with putative serine/threonine-protein kinase gskl-2, required for sister chromatid segregation and spermatid budding during male meiosis. Plays a role in regulating female meiosis II, together with gskl-2. Involved in sperm pseudopod formation and function, together with gskl-2. The protein is Putative serine/threonine-protein kinase gskl-1 of Caenorhabditis elegans.